Here is a 785-residue protein sequence, read N- to C-terminus: E3 UFM1-protein ligase 1 homolog (785 aa).

A disordered region spans residues 404–482 (NASFQDQDDD…AGGGGGNKKT (79 aa)).

The protein belongs to the UFL1 family.

In terms of biological role, E3 UFM1-protein ligase that mediates ufmylation of target proteins. The chain is E3 UFM1-protein ligase 1 homolog from Drosophila persimilis (Fruit fly).